The primary structure comprises 202 residues: Ribonuclease HII (202 aa).

The 190-residue stretch at 12 to 201 folds into the RNase H type-2 domain; the sequence is LLIAGVDEAG…VRQLKLFIPE (190 aa). A divalent metal cation is bound by residues aspartate 18, glutamate 19, and aspartate 110.

Belongs to the RNase HII family. It depends on Mn(2+) as a cofactor. Requires Mg(2+) as cofactor.

The protein localises to the cytoplasm. The catalysed reaction is Endonucleolytic cleavage to 5'-phosphomonoester.. In terms of biological role, endonuclease that specifically degrades the RNA of RNA-DNA hybrids. The polypeptide is Ribonuclease HII (Coxiella burnetii (strain CbuK_Q154) (Coxiella burnetii (strain Q154))).